The primary structure comprises 1137 residues: Protein sel-1 homolog 3 (1137 aa).

A disordered region spans residues 1–42; that stretch reads MQWRGAGLWWPRRRQQQQQQQPPPPAFGPPAAAMVPPSRGVS. 2 N-linked (GlcNAc...) asparagine glycosylation sites follow: asparagine 206 and asparagine 387. 7 Sel1-like repeats span residues 575 to 609, 611 to 647, 694 to 730, 732 to 767, 768 to 800, 801 to 839, and 840 to 877; these read HKAS…GQGS, RLSS…TKTP, AAAQ…LETE, PALI…SKGL, HQAV…EMGN, PDAS…QGGH, and IEGT…EKNG. Residue serine 613 is modified to Phosphoserine. The N-linked (GlcNAc...) asparagine glycan is linked to asparagine 942. A Sel1-like 8 repeat occupies 952–988; that stretch reads SFAYLKMGDLYYYGHQNQSQDLELSVQMYAQAALDGD. The helical transmembrane segment at 1067-1087 threads the bilayer; the sequence is LIYFLGTFLLSVVIAWMVLYL. The tract at residues 1100-1137 is disordered; it reads AWVSADPTSSTPSPAVPPAADASDHDPPMMANGPEPRG. Over residues 1102-1120 the composition is skewed to low complexity; sequence VSADPTSSTPSPAVPPAAD.

It localises to the membrane. The protein is Protein sel-1 homolog 3 (Sel1l3) of Mus musculus (Mouse).